Reading from the N-terminus, the 606-residue chain is NADH-ubiquinone oxidoreductase chain 5 (606 aa).

16 helical membrane passes run 1–21 (MNIF…PIIA), 38–58 (NIIS…IYSG), 87–107 (MIFV…SIWY), 114–134 (ITQF…LVTA), 140–160 (LFIG…WWYG), 171–191 (AILY…WFLS), 213–233 (LMGL…HPWL), 241–261 (TPVS…FLLI), 273–293 (AQTL…ICAL), 301–320 (IIAF…IGIN), 325–347 (AFLH…GSII), 366–386 (MPFT…MPFL), 409–429 (LLMT…MIFF), 457–477 (LLIG…PTTT), 488–508 (LMAL…SLAT), and 582–602 (GLIK…LLLL).

The protein belongs to the complex I subunit 5 family. As to quaternary structure, core subunit of respiratory chain NADH dehydrogenase (Complex I) which is composed of 45 different subunits.

The protein resides in the mitochondrion inner membrane. It carries out the reaction a ubiquinone + NADH + 5 H(+)(in) = a ubiquinol + NAD(+) + 4 H(+)(out). In terms of biological role, core subunit of the mitochondrial membrane respiratory chain NADH dehydrogenase (Complex I) which catalyzes electron transfer from NADH through the respiratory chain, using ubiquinone as an electron acceptor. Essential for the catalytic activity and assembly of complex I. The sequence is that of NADH-ubiquinone oxidoreductase chain 5 (MT-ND5) from Rhinoceros unicornis (Greater Indian rhinoceros).